The sequence spans 484 residues: Monocarboxylate transporter 2 (484 aa).

The Cytoplasmic portion of the chain corresponds to 1–16 (MPSEPSAPLPQPLPPD). A helical transmembrane segment spans residues 17–37 (GGWGWVVVCASFISIGFSYAF). The Extracellular portion of the chain corresponds to 38–60 (PKAVTVFFKDIQEIFNTTSSQIA). The chain crosses the membrane as a helical span at residues 61–81 (WISSIMLAVMYAGGPISSVLV). Topologically, residues 82–90 (NNYGSRPVV) are cytoplasmic. A helical transmembrane segment spans residues 91–111 (IVGGLLCCIGMILASYSNSVI). Over 112–116 (ELYLT) the chain is Extracellular. Residues 117–137 (VGFIGGLGLAFNLQPALTIIG) traverse the membrane as a helical segment. Topologically, residues 138–149 (KYFYRRRPLANG) are cytoplasmic. The chain crosses the membrane as a helical span at residues 150–170 (CAMAGSPVFLSTLAPFNQYLF). Over 171-174 (NNYG) the chain is Extracellular. Residues 175–195 (WKGSFLILGGIFLHSCVAGCL) traverse the membrane as a helical segment. Topologically, residues 196 to 245 (MRPVGPSPNTKKSKSKVGSRHDSTLKKASKVSTAQKVNRFLDFSLFMHRG) are cytoplasmic. Residues 246 to 266 (FLIYLSGNVILFLGIFAPIIF) traverse the membrane as a helical segment. Over 267 to 281 (LAQYAKHIGVDDYNS) the chain is Extracellular. A helical membrane pass occupies residues 282-302 (AFLLSVMAFIDMFARPSVGLI). Residues 303-311 (ANTSLIRPR) are Cytoplasmic-facing. The helical transmembrane segment at 312 to 332 (IQYLFSSAIIFTGICHLLCPL) threads the bilayer. The Extracellular segment spans residues 333–337 (ATTYS). The chain crosses the membrane as a helical span at residues 338-358 (ALVVYVVFFGLGFGSISSLLF). Residues 359–372 (ECLMDIVGATRFSS) are Cytoplasmic-facing. Residues 373-393 (AVGLTTIVECCPVLFGPPLAG) form a helical membrane-spanning segment. Residues 394–405 (KLLDITGEYKYL) lie on the Extracellular side of the membrane. The chain crosses the membrane as a helical span at residues 406-426 (YIASGTVVLVSGTYLLIGNAI). Residues 427–484 (NYRLLDKERKREKAKKKKSASHASREMEALNRSKQDEVTVKASNAHNPPSDRDKESNI) lie on the Cytoplasmic side of the membrane. A disordered region spans residues 438–484 (EKAKKKKSASHASREMEALNRSKQDEVTVKASNAHNPPSDRDKESNI). Composition is skewed to basic and acidic residues over residues 449 to 465 (ASRE…DEVT) and 475 to 484 (PSDRDKESNI).

It belongs to the major facilitator superfamily. Monocarboxylate porter (TC 2.A.1.13) family. As to quaternary structure, homodimer. Interacts with GRID2IP. Interacts with EMB; interaction mediates SLC16A7 targeting to the plasma membrane. Interacts with isoform 2 of BSG. Detected in testis and in spermatozoa (at protein level).

The protein resides in the cell membrane. The protein localises to the cytoplasm. It localises to the basolateral cell membrane. The catalysed reaction is (S)-lactate(in) + H(+)(in) = (S)-lactate(out) + H(+)(out). The enzyme catalyses 3-methyl-2-oxobutanoate(out) + H(+)(out) = 3-methyl-2-oxobutanoate(in) + H(+)(in). It carries out the reaction acetoacetate(out) + H(+)(out) = acetoacetate(in) + H(+)(in). It catalyses the reaction (R)-3-hydroxybutanoate(out) + H(+)(out) = (R)-3-hydroxybutanoate(in) + H(+)(in). The catalysed reaction is 4-methyl-2-oxopentanoate(out) + H(+)(out) = 4-methyl-2-oxopentanoate(in) + H(+)(in). The enzyme catalyses pyruvate(out) + H(+)(out) = pyruvate(in) + H(+)(in). It carries out the reaction (S)-3-hydroxybutanoate(out) + H(+)(out) = (S)-3-hydroxybutanoate(in) + H(+)(in). Transport activity exhibits steep dependence on substrate concentration. Substrate concentration sensitivity of SLC16A7 arises from the strong inter-subunit cooperativity of the SLC16A7 dimer during transport. Inhibited by AR-C155858. Functionally, proton-coupled monocarboxylate symporter. Catalyzes the rapid transport across the plasma membrane of monocarboxylates such as L-lactate, pyruvate and ketone bodies, acetoacetate, beta-hydroxybutyrate and acetate. Dimerization is functionally required and both subunits work cooperatively in transporting substrate. This is Monocarboxylate transporter 2 (Slc16a7) from Mus musculus (Mouse).